Here is a 239-residue protein sequence, read N- to C-terminus: Fatty acid metabolism regulator protein (239 aa).

One can recognise an HTH gntR-type domain in the interval 6–74 (QSPAGFAEEY…HGKPTQVNNF (69 aa)). A DNA-binding region (H-T-H motif) is located at residues 34-53 (ERELSELIGVTRTTLREVLQ).

Homodimer.

Its subcellular location is the cytoplasm. Multifunctional regulator of fatty acid metabolism. This Edwardsiella ictaluri (strain 93-146) protein is Fatty acid metabolism regulator protein.